The following is a 1229-amino-acid chain: MKYFLLLFLLVLSFTLVESVYQYQILILEPIYRFTDSAAVPAKSIYFTNLPQHFSLTQKSSKLDLSQFNVVRGFTQEMFLKNLGCGTDTCQNFPATVTSVYNIIDLKGRLKFETNPAGTDNVLGKAGYLATEEIEGLVRYDEYYSEEDDSFTYTNGKYPNQFGACQLRDYGKLRYKFVRTLGHAFTAVAIPENLPIYSIFAYDDGLPEPTTTVSPTLSPTQYVFETNPIWKILKNSKNGTQGVGAVNLPWTPPVSASPIEPTNVCLLNGNSSVLSRYGEIDRMLQFFDDTHVIIGFKDSIQDASNTFIYSYIGYAFKSSDNLCGIPLKPIRELYKAGVGNTVVAGDDYSDLISSGYMLTGNIIGYTIDCNSTTDGELIVMIPDGISTISSTTILLTSQFATSSPSQIVGYYVQPVKIVGPSASGGEQGYWVDPELPEPQIGDVLGISNVCLFTASSSIISKCGYTRNIYVYYDNVDKFYFVSLYTFGRSVTSKVIGIAFETEENSCGLNLVPIRELYKDRYYVVAGNDYQYLIDDGYNITGNIVGYTVDCKDSKDEFVYGHLPSYAFSTTTSSMTTTASDSTTSDSSVIVSSSKNPAVSNPFITTYSLPSSPNNPFISITTTPDSASSQKISTTTAISHSAYSASPSTIPTTTPYDLTKPLPKLDCNIIENYGDLNGRMVNFANVMEVGDNITITGHIWQNASESTFNLYVGMDPKYLQSYISIHINMRWATDGIVYNYFWGMWNYQFESYSTRPFSRGLPYVLSVVRGINYYDVYGNGQFIKKFGIIGSVALHQVGAMYGYQQWNIDTVKMNCARSHTTTVEPSTPLETASTSQSTPSATLTSTTENIPSTSKIPETSTTQRPTSPILTSGATSTSSSTESTTTSPTTSTTTTLPPTTTPYNLSAPIPKLDCNTIQFYGNLLWRPVVFSRYMEVGDNITLTGFIWNNATESNVNFYLGFNPLFGTTAVPVHISQRWSSSARIIYNNFWGQWGPEAFSARPFTRGQPFVISLIKTANSHQIYGNGQLLINFGYRGTASQNLIGSMIAYRESTIDTVSMACVRPPTTPTTTTSTTTTTTPKLTTTSTLPSTSTAIATTDVSTRPRSCDINSITLGEGDANTPQLQLDAVLGESSGSSLSIYCRGLPNYSIYMMFNVNQGGPPPVIDGYLEITLDCLPDSEGVWTFGGREITAISCFQAPKCSTFVPSFWRSVDLPILSPTSRVVMLLTWQ.

An N-terminal signal peptide occupies residues 1–19; that stretch reads MKYFLLLFLLVLSFTLVES. 6 N-linked (GlcNAc...) asparagine glycosylation sites follow: asparagine 238, asparagine 270, asparagine 370, asparagine 538, asparagine 691, and asparagine 701. Residues 678 to 813 form the Galectin 1 domain; the sequence is RMVNFANVME…QWNIDTVKMN (136 aa). The span at 818–829 shows a compositional bias: polar residues; sequence HTTTVEPSTPLE. Positions 818-903 are disordered; that stretch reads HTTTVEPSTP…TLPPTTTPYN (86 aa). Residues 830–846 are compositionally biased toward low complexity; sequence TASTSQSTPSATLTSTT. A compositionally biased stretch (polar residues) spans 847–869; the sequence is ENIPSTSKIPETSTTQRPTSPIL. Positions 870–901 are enriched in low complexity; that stretch reads TSGATSTSSSTESTTTSPTTSTTTTLPPTTTP. 3 N-linked (GlcNAc...) asparagine glycosylation sites follow: asparagine 903, asparagine 938, and asparagine 948. Residues 925-1059 enclose the Galectin 2 domain; that stretch reads RPVVFSRYME…ESTIDTVSMA (135 aa). The segment at 1061–1087 is disordered; the sequence is VRPPTTPTTTTSTTTTTTPKLTTTSTL. Low complexity predominate over residues 1067-1087; it reads PTTTTSTTTTTTPKLTTTSTL. A glycan (N-linked (GlcNAc...) asparagine) is linked at asparagine 1146.

This is an uncharacterized protein from Caenorhabditis elegans.